A 155-amino-acid chain; its full sequence is Protein SprT-like (155 aa).

One can recognise a SprT-like domain in the interval 6–148 (LQRLVERVSL…VCGQCGGKLM (143 aa)). Position 67 (His-67) interacts with Zn(2+). The active site involves Glu-68. His-71 serves as a coordination point for Zn(2+).

This sequence belongs to the SprT family. Zn(2+) serves as cofactor.

Its subcellular location is the cytoplasm. The polypeptide is Protein SprT-like (Geobacillus sp. (strain WCH70)).